The primary structure comprises 685 residues: Augmin complex subunit dgt5 (685 aa).

Coiled coils occupy residues 87-165 (LQRY…NKIQ) and 342-379 (NMRN…DLKL).

Component of the augmin complex composed of dgt2, dgt3, dgt4, dgt5, dgt6, msd1, msd5 and wac. The complex interacts directly or indirectly with microtubules and is required for centrosome-independent generation of spindle microtubules.

It localises to the cytoplasm. Its subcellular location is the cytoskeleton. The protein resides in the spindle. The protein localises to the chromosome. It is found in the centromere. It localises to the kinetochore. Its subcellular location is the microtubule organizing center. The protein resides in the centrosome. In terms of biological role, as part of the augmin complex, plays a role in centrosome-independent generation of spindle microtubules. The complex is required for mitotic spindle assembly through its involvement in localizing gamma-tubulin to spindle microtubules. The polypeptide is Augmin complex subunit dgt5 (Drosophila melanogaster (Fruit fly)).